The primary structure comprises 2240 residues: MDDKGDPSNEEAPKAIKPTSKEFRKTWGFRRTTIAKREGAGDAEADPLEPPPPQQQLGLSLRRSGRQPKRTERVEQFLTIARRRGRRSMPVSLEDSGEPTSCPATDAETASEGSVESASETRSGPQSASTAVKERPASSEKVKGGDDHDDTSDSDSDGLTLKELQNRLRRKREQEPTERPLKGIQSRLRKKRREEGPAETVGSEASDTVEGVLPSKQEPENDQGVVSQAGKDDRESKLEGKAAQDIKDEEPGDLGRPKPECEGYDPNALYCICRQPHNNRFMICCDRCEEWFHGDCVGISEARGRLLERNGEDYICPNCTILQVQDETHSETADQQEAKWRPGDADGTDCTSIGTIEQKSSEDQGIKGRIEKAANPSGKKKLKIFQPVIEAPGASKCIGPGCCHVAQPDSVYCSNDCILKHAAATMKFLSSGKEQKPKPKEKMKMKPEKPSLPKCGAQAGIKISSVHKRPAPEKKETTVKKAVVVPARSEALGKEAACESSTPSWASDHNYNAVKPEKTAAPSPSLLYKSTKEDRRSEEKAAAMAASKKTAPPGSAVGKQPAPRNLVPKKSSFANVAAATPAIKKPPSGFKGTIPKRPWLSATPSSGASAARQAGPAPAAATAASKKFPGSAALVGAVRKPVVPSVPMASPAPGRLGAMSAAPSQPNSQIRQNIRRSLKEILWKRVNDSDDLIMTENEVGKIALHIEKEMFNLFQVTDNRYKSKYRSIMFNLKDPKNQGLFHRVLREEISLAKLVRLKPEELVSKELSTWKERPARSVMESRTKLHNESKKTAPRQEAIPDLEDSPPVSDSEEQQESARAVPEKSTAPLLDVFSSMLKDTTSQHRAHLFDLNCKICTGQVPSAEDEPAPKKQKLSASVKKEDLKSKHDSSAPDPAPDSADEVMPEAVPEVASEPGLESASHPNVDRTYFPGPPGDGHPEPSPLEDLSPCPASCGSGVVTTVTVSGRDPRTAPSSSCTAVASAASRPDSTHMVEARQDVPKPVLTSVMVPKSILAKPSSSPDPRYLSVPPSPNISTSESRSPPEGDTTLFLSRLSTIWKGFINMQSVAKFVTKAYPVSGCFDYLSEDLPDTIHIGGRIAPKTVWDYVGKLKSSVSKELCLIRFHPATEEEEVAYISLYSYFSSRGRFGVVANNNRHVKDLYLIPLSAQDPVPSKLLPFEGPGLESPRPNIILGLVICQKIKRPANSGELDKMDEKRTRLQPEEADVPAYPKVATVPQSEKKPSKYPLCSADAAVSTTPPGSPPPPPPLPEPPVLKVLSSLKPAAPSPATAATTAAAASTAASSTASSASKTASPLEHILQTLFGKKKSFDPSAREPPGSTAGLPQEPKTTAEDGVPAPPLLDPIVQQFGQFSKDKALEEEEDDRPYDPEEEYDPERAFDTQLVERGRRHEVERAPEAAAAEREEVAYDPEDETILEEAKVTVDDLPNRMCADVRRNSVERPAEPVAGAATPSLVEQQKMLEELNKQIEEQKRQLEEQEEALRQQRAAVGVSMAHFSVSDALMSPPPKSSLPKAELFQQEQQSADKPASLPPASQASNHRDPRQARRLATETGEGEGEPLSRLSARGAQGALPERDASRGGLVGQAPMPVPEEKEPASSPWASGEKPPAGSEQDGWKAEPGEGTRPATVGDSSARPARRVLLPTPPCGALQPGFPLQHDGERDPFTCPGFASQDKALGSAQYEDPRNLHSAGRSSSPAGETEGDREPQARPGEGTAPLPPPGQKVGGSQPPFQGQREPGPHALGMSGLHGPNFPGPRGPAPPFPEENIASNDGPRGPPPARFGAQKGPIPSLFSGQHGPPPYGDSRGPSPSYLGGPRGVAPSQFEERKDPHGEKREFQDAPYNEVTGAPAQFEGTEQAPFLGSRGGAPFQFGGQRRPLLSQLKGPRGGPPPSQFGGQRGPPPGHFVGPRGPHPSQFETARGPHPNQFEGPRGQAPNFMPGPRGIQPQQFEDQRVHSPPRFTNQRAPAPLQFGGLRGSAPFSEKNEQTPSRFHFQGQAPQVMKPGPRPLLELPSHPPQHRKDRWEEAGPPSALSSSAPGQGPEADGQWASADFREGKGHEYRNQTFEGRQRERFDVGPKEKPLEEPDAQGRASEDRRRERERGRNWSRERDWDRPREWDRHRDKDSSRDWDRNRERSANRDREREADRGKEWDRSRERSRNRERERDRRRDRDRSRSRERDRDKARDRERGRDRKDRSKSKESARDPKPEASRASDAGTASQA.

Methionine 1 bears the N-acetylmethionine mark. Basic and acidic residues predominate over residues methionine 1 to lysine 25. The interval methionine 1–proline 259 is disordered. Phosphoserine is present on residues serine 60 and serine 114. Over residues serine 111 to threonine 130 the composition is skewed to polar residues. A compositionally biased stretch (basic and acidic residues) spans valine 132–aspartate 146. Residues aspartate 147–serine 156 show a composition bias toward acidic residues. A Phosphothreonine modification is found at threonine 151. Phosphoserine is present on residues serine 152 and serine 154. Short sequence motifs (nuclear localization signal) lie at residues glutamine 165–glutamate 173 and glutamine 185–arginine 193. A compositionally biased stretch (basic and acidic residues) spans arginine 172 to leucine 181. The segment covering glycine 230–isoleucine 246 has biased composition (basic and acidic residues). A Glycyl lysine isopeptide (Lys-Gly) (interchain with G-Cter in SUMO2) cross-link involves residue lysine 247. Residues alanine 268 to leucine 322 form a PHD-type zinc finger. Disordered stretches follow at residues serine 431–glycine 456, serine 501–valine 567, lysine 584–proline 618, arginine 773–threonine 826, valine 860–serine 947, leucine 1013–aspartate 1045, glycine 1206–aspartate 1427, arginine 1453–leucine 1472, and serine 1517–alanine 2240. Residues lysine 433–serine 451 are compositionally biased toward basic and acidic residues. Positions serine 501–asparagine 510 are enriched in polar residues. Serine 523 is subject to Phosphoserine. Residues serine 530 to alanine 541 show a composition bias toward basic and acidic residues. Composition is skewed to low complexity over residues alanine 542–alanine 551 and proline 604–proline 618. One can recognise a TFIIS central domain in the interval isoleucine 670–lysine 790. Residues arginine 773–lysine 791 are compositionally biased toward basic and acidic residues. Over residues proline 800–glutamine 815 the composition is skewed to acidic residues. 2 positions are modified to phosphoserine: serine 805 and serine 809. Positions valine 878 to serine 890 are enriched in basic and acidic residues. Lysine 879 is covalently cross-linked (Glycyl lysine isopeptide (Lys-Gly) (interchain with G-Cter in SUMO2)). Serine 889 and serine 898 each carry phosphoserine. Residues proline 930–serine 941 show a composition bias toward pro residues. Serine 1019, serine 1030, and serine 1040 each carry phosphoserine. Residues glutamate 1207 to proline 1220 show a composition bias toward basic and acidic residues. Tyrosine 1244 bears the Phosphotyrosine mark. The residue at position 1256 (threonine 1256) is a Phosphothreonine. A compositionally biased stretch (pro residues) spans proline 1258 to proline 1271. Residues serine 1260 and serine 1312 each carry the phosphoserine modification. Low complexity predominate over residues leucine 1276–proline 1313. Over residues leucine 1376–aspartate 1392 the composition is skewed to acidic residues. Residues proline 1393–valine 1424 show a composition bias toward basic and acidic residues. A Phosphoserine modification is found at serine 1456. Position 1469 is a phosphothreonine (threonine 1469). 2 positions are modified to phosphoserine: serine 1522 and serine 1714. Residues phenylalanine 1771 to proline 1782 are compositionally biased toward pro residues. Arginine 1835 is modified (omega-N-methylarginine). Positions phenylalanine 1842–glutamine 1856 are enriched in basic and acidic residues. Arginine 1893, arginine 1894, arginine 1977, arginine 1982, arginine 1993, arginine 2008, and arginine 2024 each carry asymmetric dimethylarginine. Over residues alanine 2044–proline 2059 the composition is skewed to low complexity. Composition is skewed to basic and acidic residues over residues aspartate 2069–glutamate 2101 and alanine 2109–arginine 2230.

As to quaternary structure, interacts specifically (via PHD-type zinc finger) with histone H3 that is trimethylated at 'Lys-4' (H3K4me3), histone phosphorylation at 'Thr-3' or 'Thr-6' disrupts this binding and promotes translocation of DIDO1 from chromatin to the mitotic spindle during mitosis. Ubiquitous.

The protein localises to the cytoplasm. Its subcellular location is the nucleus. It is found in the cytoskeleton. It localises to the spindle. Putative transcription factor, weakly pro-apoptotic when overexpressed. Tumor suppressor. Required for early embryonic stem cell development. In terms of biological role, displaces isoform 4 at the onset of differentiation, required for repression of stemness genes. This Homo sapiens (Human) protein is Death-inducer obliterator 1 (DIDO1).